The sequence spans 342 residues: MDGAGSLTRSFFRSLRPQADLKAAAIGAVVLLREWVQDKRRERLHAARAAAKDKIKAKAVVEREPPPRVVALVERYLPRRVGISMTVLLLIGSCGFGIVKGGHLQDFVTAISDARNAMANSAGFRITSVVINGRKQLTQDEILAIGGVSGRSSLLFLDADAVRDKLKANPWIADATVLKLYPGQLMIELTERKAFALWQEAGRLSVIADDGAVLEPYVSRRFLSLPLVVGKGADTQARDFLALLARYPQVNSITKAAIFVGERRWNLRLKDGLDIRLPEQDVGNALAMLSRLDKEDKLFSRDIVAVDMRLPDRLVVQLSEDAAKAREEQFKDKKKKKAGDAA.

Topologically, residues 1 to 80 are cytoplasmic; that stretch reads MDGAGSLTRS…ALVERYLPRR (80 aa). A helical transmembrane segment spans residues 81-99; that stretch reads VGISMTVLLLIGSCGFGIV. Over 100-342 the chain is Periplasmic; it reads KGGHLQDFVT…KKKKKAGDAA (243 aa). Residues 124 to 192 form the POTRA domain; the sequence is FRITSVVING…GQLMIELTER (69 aa).

This sequence belongs to the FtsQ/DivIB family. FtsQ subfamily.

The protein resides in the cell inner membrane. Essential cell division protein. The chain is Cell division protein FtsQ from Bradyrhizobium diazoefficiens (strain JCM 10833 / BCRC 13528 / IAM 13628 / NBRC 14792 / USDA 110).